The primary structure comprises 263 residues: 4-hydroxy-2-oxo-heptane-1,7-dioate aldolase (263 aa).

His-45 serves as the catalytic Proton acceptor. Position 147 (Gln-147) interacts with substrate. Glu-149 is an a divalent metal cation binding site. The substrate site is built by Ala-174 and Asp-175. Position 175 (Asp-175) interacts with a divalent metal cation.

It belongs to the HpcH/HpaI aldolase family. As to quaternary structure, homohexamer; trimer of dimers. It depends on a divalent metal cation as a cofactor.

It carries out the reaction 4-hydroxy-2-oxoheptanedioate = succinate semialdehyde + pyruvate. The protein operates within aromatic compound metabolism; 4-hydroxyphenylacetate degradation; pyruvate and succinate semialdehyde from 4-hydroxyphenylacetate: step 7/7. Catalyzes the reversible retro-aldol cleavage of 4-hydroxy-2-ketoheptane-1,7-dioate (HKHD) to pyruvate and succinic semialdehyde. This is 4-hydroxy-2-oxo-heptane-1,7-dioate aldolase from Salmonella arizonae (strain ATCC BAA-731 / CDC346-86 / RSK2980).